Consider the following 149-residue polypeptide: Protein-export protein SecB (149 aa).

The protein belongs to the SecB family. Homotetramer, a dimer of dimers. One homotetramer interacts with 1 SecA dimer.

It is found in the cytoplasm. Its function is as follows. One of the proteins required for the normal export of preproteins out of the cell cytoplasm. It is a molecular chaperone that binds to a subset of precursor proteins, maintaining them in a translocation-competent state. It also specifically binds to its receptor SecA. This Hydrogenovibrio crunogenus (strain DSM 25203 / XCL-2) (Thiomicrospira crunogena) protein is Protein-export protein SecB.